Consider the following 172-residue polypeptide: Shikimate kinase (172 aa).

14–19 lines the ATP pocket; the sequence is GAGKST. Serine 18 contacts Mg(2+). Residues aspartate 36, arginine 60, and glycine 82 each coordinate substrate. An ATP-binding site is contributed by arginine 120. Arginine 140 provides a ligand contact to substrate. Glutamine 157 contributes to the ATP binding site.

This sequence belongs to the shikimate kinase family. Monomer. Mg(2+) is required as a cofactor.

It is found in the cytoplasm. The enzyme catalyses shikimate + ATP = 3-phosphoshikimate + ADP + H(+). Its pathway is metabolic intermediate biosynthesis; chorismate biosynthesis; chorismate from D-erythrose 4-phosphate and phosphoenolpyruvate: step 5/7. Functionally, catalyzes the specific phosphorylation of the 3-hydroxyl group of shikimic acid using ATP as a cosubstrate. This Pseudoalteromonas translucida (strain TAC 125) protein is Shikimate kinase.